We begin with the raw amino-acid sequence, 921 residues long: MEYKNTLLMPKTEFPMRGNLPKREPAMQEKWAEMNIYEKVQEHTKGRPLFVLHDGPPYANGDIHMGHALNKVLKDFIVRYKSMTGFCAPYVPGWDTHGLPIEQALTNKGVKRKEMTVAEFRKLCAEYAYEQVERQREQFKRLGVRADWDNPYITLEPAYEAQQIKVFGDMAKKGYIYKGQKPVYWSPTSESALAEAEIEYQDKKSASIYVAFPVKDGKNVLEGDEKYIIWTTTPWTLPANLGISVHPELEYAIVKVNDEKYIIASELFETVAKTLEWENAEVVKTVKGSELEYTVAKHPFYDRDSLVMLGDHVTTDAGTGCVHTAPGHGEDDFIVGKKYGLEVLCPVDDKGVLTEEAPGFEGLFYDKANKPITEKLEEVGALLKLTFITHSYPHDWRTKKPIIFRATAQWFASIEAFRKELLEAVAETKWVPAWGETRLHNMVRDRGDWCISRQRAWGVPIPVFYAENGDPIITDETINHVADLFREHGSNVWFEREAKDLLPEGFTHQGSPNGEFRKETDIMDVWFDSGSSHQAVLEERDDLQRPADLYLEGSDQYRGWFNSSLSTAVAVTGKAPYKGVLSHGFVLDGEGRKMSKSIGNIVVPKKIMDQLGGDILRLWVSSVDYQSDVRISDDILKQVAEVYRKIRNTFRFLLGNLDDFKPSENTVAVAELREVDRYMLVKLNDLITKVKEAYETYDFAAVYHAIHNFCTIDLSSFYLDFAKDILYIEGANHEDRRAIQTVLYDVLVALTKLVTPILPHTADEVWPYIPGVTEESVQLTDMPEAVQLDGAEALKTKWDAFMTLRDDVLKALEVARNEKVIGKSLNASITLYPTAEMKAMLESINEDLKQLFIVSEYKLGGMMEEAPADAPKYEHTAVVVAQATGETCERCWVVSETIGKDAEHETLCERCATVVKENYVK.

Residues 57-67 (PYANGDIHMGH) carry the 'HIGH' region motif. Glutamate 552 is an L-isoleucyl-5'-AMP binding site. Residues 593–597 (KMSKS) carry the 'KMSKS' region motif. Residue lysine 596 participates in ATP binding. The Zn(2+) site is built by cysteine 888, cysteine 891, cysteine 908, and cysteine 911.

It belongs to the class-I aminoacyl-tRNA synthetase family. IleS type 1 subfamily. As to quaternary structure, monomer. Zn(2+) serves as cofactor.

The protein resides in the cytoplasm. It catalyses the reaction tRNA(Ile) + L-isoleucine + ATP = L-isoleucyl-tRNA(Ile) + AMP + diphosphate. Its function is as follows. Catalyzes the attachment of isoleucine to tRNA(Ile). As IleRS can inadvertently accommodate and process structurally similar amino acids such as valine, to avoid such errors it has two additional distinct tRNA(Ile)-dependent editing activities. One activity is designated as 'pretransfer' editing and involves the hydrolysis of activated Val-AMP. The other activity is designated 'posttransfer' editing and involves deacylation of mischarged Val-tRNA(Ile). This is Isoleucine--tRNA ligase 1 from Bacillus cereus (strain ZK / E33L).